Consider the following 371-residue polypeptide: DNA-directed RNA polymerase subunit alpha (371 aa).

The segment at 1 to 248 is alpha N-terminal domain (alpha-NTD); the sequence is MSVKYGKFEM…KHFEVFNQFN (248 aa). The segment at 264 to 371 is alpha C-terminal domain (alpha-CTD); that stretch reads DQDELMDKLS…KELVKHEDAK (108 aa).

It belongs to the RNA polymerase alpha chain family. As to quaternary structure, homodimer. The RNAP catalytic core consists of 2 alpha, 1 beta, 1 beta' and 1 omega subunit. When a sigma factor is associated with the core the holoenzyme is formed, which can initiate transcription.

It catalyses the reaction RNA(n) + a ribonucleoside 5'-triphosphate = RNA(n+1) + diphosphate. Functionally, DNA-dependent RNA polymerase catalyzes the transcription of DNA into RNA using the four ribonucleoside triphosphates as substrates. The chain is DNA-directed RNA polymerase subunit alpha from Protochlamydia amoebophila (strain UWE25).